Here is a 365-residue protein sequence, read N- to C-terminus: Peptide chain release factor 2 (365 aa).

N5-methylglutamine is present on glutamine 251.

Belongs to the prokaryotic/mitochondrial release factor family. Methylated by PrmC. Methylation increases the termination efficiency of RF2.

The protein localises to the cytoplasm. Functionally, peptide chain release factor 2 directs the termination of translation in response to the peptide chain termination codons UGA and UAA. The polypeptide is Peptide chain release factor 2 (Campylobacter jejuni subsp. doylei (strain ATCC BAA-1458 / RM4099 / 269.97)).